Consider the following 432-residue polypeptide: Trigger factor (432 aa).

In terms of domain architecture, PPIase FKBP-type spans 161–246 (GTRATINFVG…VVKVEARELP (86 aa)).

Belongs to the FKBP-type PPIase family. Tig subfamily.

It localises to the cytoplasm. The catalysed reaction is [protein]-peptidylproline (omega=180) = [protein]-peptidylproline (omega=0). Involved in protein export. Acts as a chaperone by maintaining the newly synthesized protein in an open conformation. Functions as a peptidyl-prolyl cis-trans isomerase. In Aliivibrio fischeri (strain MJ11) (Vibrio fischeri), this protein is Trigger factor.